Reading from the N-terminus, the 369-residue chain is Homoserine O-succinyltransferase (369 aa).

Residues 1 to 21 (MVRIVPSARRTRAPAKLDGRS) are disordered. The region spanning 86 to 350 (VVFVAGGISA…PFGHDAFLKE (265 aa)) is the AB hydrolase-1 domain. The segment at 92-95 (GISA) is important for substrate specificity. Residue S172 is the Nucleophile of the active site. R233 is a substrate binding site. Residues D314 and H344 contribute to the active site. D345 serves as a coordination point for substrate.

Belongs to the AB hydrolase superfamily. MetX family. As to quaternary structure, homodimer.

The protein localises to the cytoplasm. The catalysed reaction is L-homoserine + succinyl-CoA = O-succinyl-L-homoserine + CoA. It participates in amino-acid biosynthesis; L-methionine biosynthesis via de novo pathway; O-succinyl-L-homoserine from L-homoserine: step 1/1. Its function is as follows. Transfers a succinyl group from succinyl-CoA to L-homoserine, forming succinyl-L-homoserine. This Xanthomonas campestris pv. campestris (strain ATCC 33913 / DSM 3586 / NCPPB 528 / LMG 568 / P 25) protein is Homoserine O-succinyltransferase.